Reading from the N-terminus, the 200-residue chain is Phospholipase A2 inhibitor CgMIP-I (200 aa).

The first 19 residues, 1 to 19 (MKYLHTICLLFIFVARGNS), serve as a signal peptide directing secretion. Disulfide bonds link Cys22-Cys46, Cys25-Cys32, Cys39-Cys67, Cys73-Cys94, Cys95-Cys100, Cys118-Cys143, and Cys136-Cys165. N-linked (GlcNAc...) asparagine glycosylation is present at Asn176.

The protein belongs to the CNF-like-inhibitor family. As to quaternary structure, homomer of 110 kDa composed of 20-25-kDa subunits. N-glycosylated. The glycosidic chain may contain superficial sialic acid residues. As to expression, expressed by the liver.

The protein resides in the secreted. Its function is as follows. Inhibits the enzymatic activity of basic phospholipase A2. Specifically neutralizes PLA2, myotoxic, edema-forming, cytolytic, and anti-coagulant activities, as well as intracerebral lethal effect of the basic myotoxin I from the same venom (AC P0DQP6), crotoxin heterodimer and crotoxin subunit B alone. Does not block the enzymatic activity of crude acidic PLA2 fractions from the same venom. The polypeptide is Phospholipase A2 inhibitor CgMIP-I (Cerrophidion godmani (Porthidium godmani)).